A 275-amino-acid polypeptide reads, in one-letter code: Putative carbamate hydrolase RutD (275 aa).

It belongs to the AB hydrolase superfamily. Hydrolase RutD family.

The enzyme catalyses carbamate + 2 H(+) = NH4(+) + CO2. Its function is as follows. Involved in pyrimidine catabolism. May facilitate the hydrolysis of carbamate, a reaction that can also occur spontaneously. This chain is Putative carbamate hydrolase RutD, found in Escherichia coli O6:H1 (strain CFT073 / ATCC 700928 / UPEC).